The chain runs to 3133 residues: Cysteine repeat modular protein A (3133 aa).

The interval 1–39 is disordered; it reads MDSASTSMSRVHPSGVYRRPLLPSGGPRSTSERDERVDL. Residues 30-39 show a composition bias toward basic and acidic residues; that stretch reads TSERDERVDL. The helical transmembrane segment at 123–143 threads the bilayer; that stretch reads LFLLFSSSPLLLLLLLHQFFI. Basic and acidic residues-rich tracts occupy residues 173–211 and 301–311; these read TFEE…DGKE and NESEKAERARL. 2 disordered regions span residues 173–234 and 294–317; these read TFEE…EGRR and VSPS…STPA. Asparagine 301, asparagine 392, and asparagine 470 each carry an N-linked (GlcNAc...) asparagine glycan. Positions 577-644 constitute a Kringle domain; that stretch reads DETLEQGKLY…DPHVRFDFCD (68 aa). Cystine bridges form between cysteine 599–cysteine 631 and cysteine 620–cysteine 643. 2 N-linked (GlcNAc...) asparagine glycosylation sites follow: asparagine 1364 and asparagine 1532. Helical transmembrane passes span 2229 to 2249, 2276 to 2296, and 2339 to 2359; these read MVWN…FNIV, LTGI…PSWI, and VFYA…MSII. Residue asparagine 2369 is glycosylated (N-linked (GlcNAc...) asparagine). Transmembrane regions (helical) follow at residues 2420–2440, 2489–2509, and 2539–2559; these read AAKF…FVYS, VGIT…FLVL, and WEMV…VALI. Asparagine 2565 carries N-linked (GlcNAc...) asparagine glycosylation. The helical transmembrane segment at 2569-2589 threads the bilayer; that stretch reads VWLAVVIAVIFLIIHLVTQPF. An N-linked (GlcNAc...) asparagine glycan is attached at asparagine 2602. 2 helical membrane-spanning segments follow: residues 2607-2627 and 2632-2652; these read IWTI…SGSV and LLFV…SLMF. Composition is skewed to basic and acidic residues over residues 2827 to 2838 and 3049 to 3069; these read FAAKDETPTAEE and QEEN…DREI. Disordered regions lie at residues 2827-2847 and 3049-3101; these read FAAK…DERL and QEEN…LPEG. The stretch at 2955-3068 forms a coiled coil; it reads SEALQKRNRK…KEEREEADRE (114 aa). Residues 3083–3094 are compositionally biased toward acidic residues; it reads GEDDTATIDDSS.

Component of a complex, at least composed of cysteine repeat modular protein A (CRMPa), cysteine repeat modular protein B (CRMPb), micronemal protein 15 (MIC15) and thrombospondin type 1 domain-containing protein (TSP1).

It is found in the cell membrane. Its subcellular location is the endoplasmic reticulum. The protein resides in the golgi apparatus. Functionally, required for triggering rhoptry secretion. Plays a role in host cell invasion. This chain is Cysteine repeat modular protein A, found in Toxoplasma gondii.